The following is a 289-amino-acid chain: Prepilin leader peptidase/N-methyltransferase (289 aa).

The chain crosses the membrane as a helical span at residues 13-33 (AFVLCALVLGLLVGSFLNVVI). Zn(2+) is bound by residues Cys-72, Cys-75, Cys-97, and Cys-100. The next 5 membrane-spanning stretches (helical) occupy residues 128–148 (FSWQAGAMLLLTWGLLAMSMI), 159–179 (LVLPLLWLGLIINSFGLFASL), 183–203 (LWGAVVGYLALWSVYWLFKLV), 228–248 (VLPLTILLSSVVGAVLGTVML), and 256–276 (GTPIPFGPYLAIAGWVALLWG).

This sequence belongs to the peptidase A24 family. The cofactor is Zn(2+).

It localises to the cell inner membrane. It catalyses the reaction Typically cleaves a -Gly-|-Phe- bond to release an N-terminal, basic peptide of 5-8 residues from type IV prepilin, and then N-methylates the new N-terminal amino group, the methyl donor being S-adenosyl-L-methionine.. In terms of biological role, plays an essential role in type IV pili and type II pseudopili formation by proteolytically removing the leader sequence from substrate proteins and subsequently monomethylating the alpha-amino group of the newly exposed N-terminal phenylalanine. The polypeptide is Prepilin leader peptidase/N-methyltransferase (pilD) (Stutzerimonas stutzeri (Pseudomonas stutzeri)).